A 146-amino-acid chain; its full sequence is Superoxide dismutase [Mn] 2 (146 aa).

Mn(2+)-binding residues include His-42, Asp-126, and His-130.

Belongs to the iron/manganese superoxide dismutase family. It depends on Mn(2+) as a cofactor.

The catalysed reaction is 2 superoxide + 2 H(+) = H2O2 + O2. Destroys superoxide anion radicals which are normally produced within the cells and which are toxic to biological systems. The protein is Superoxide dismutase [Mn] 2 (sod2) of Haloferax mediterranei (Halobacterium mediterranei).